Reading from the N-terminus, the 299-residue chain is Probable lipid kinase YegS-like (299 aa).

Residues 2–133 (ATYPESLLIL…VDIAQVNDKT (132 aa)) form the DAGKc domain. ATP-binding positions include threonine 40, 66-72 (GDGTINE), and threonine 95. Mg(2+) is bound by residues leucine 215, aspartate 218, and leucine 220. The active-site Proton acceptor is the glutamate 271.

It belongs to the diacylglycerol/lipid kinase family. YegS lipid kinase subfamily. Mg(2+) is required as a cofactor. Ca(2+) serves as cofactor.

It is found in the cytoplasm. Functionally, probably phosphorylates lipids; the in vivo substrate is unknown. The sequence is that of Probable lipid kinase YegS-like from Enterobacter sp. (strain 638).